A 117-amino-acid chain; its full sequence is uncharacterized protein (117 aa).

This is an uncharacterized protein from Acidianus convivator (ABV).